The primary structure comprises 227 residues: Enolase-phosphatase E1 (227 aa).

This sequence belongs to the HAD-like hydrolase superfamily. MasA/MtnC family. Monomer. The cofactor is Mg(2+).

The catalysed reaction is 5-methylsulfanyl-2,3-dioxopentyl phosphate + H2O = 1,2-dihydroxy-5-(methylsulfanyl)pent-1-en-3-one + phosphate. Its pathway is amino-acid biosynthesis; L-methionine biosynthesis via salvage pathway; L-methionine from S-methyl-5-thio-alpha-D-ribose 1-phosphate: step 3/6. It functions in the pathway amino-acid biosynthesis; L-methionine biosynthesis via salvage pathway; L-methionine from S-methyl-5-thio-alpha-D-ribose 1-phosphate: step 4/6. Its function is as follows. Bifunctional enzyme that catalyzes the enolization of 2,3-diketo-5-methylthiopentyl-1-phosphate (DK-MTP-1-P) into the intermediate 2-hydroxy-3-keto-5-methylthiopentenyl-1-phosphate (HK-MTPenyl-1-P), which is then dephosphorylated to form the acireductone 1,2-dihydroxy-3-keto-5-methylthiopentene (DHK-MTPene). The protein is Enolase-phosphatase E1 of Pseudomonas savastanoi pv. phaseolicola (strain 1448A / Race 6) (Pseudomonas syringae pv. phaseolicola (strain 1448A / Race 6)).